The following is a 529-amino-acid chain: GMP synthase [glutamine-hydrolyzing] (529 aa).

The Glutamine amidotransferase type-1 domain maps to 17–206 (TILVLDFGSQ…AIDICQASNN (190 aa)). Cys93 (nucleophile) is an active-site residue. Catalysis depends on residues His180 and Glu182. Residues 207-404 (WTMENFIDTE…MGVPHDLVWR (198 aa)) form the GMPS ATP-PPase domain. 235–241 (SGGVDST) provides a ligand contact to ATP. Residues Arg308, Asp466, Lys521, and Glu527 each coordinate XMP.

As to quaternary structure, homodimer. Requires Mg(2+) as cofactor.

Its subcellular location is the cytoplasm. The protein localises to the cytosol. It catalyses the reaction XMP + L-glutamine + ATP + H2O = GMP + L-glutamate + AMP + diphosphate + 2 H(+). It functions in the pathway purine metabolism; GMP biosynthesis; GMP from XMP (L-Gln route): step 1/1. Functionally, catalyzes the conversion of xanthine monophosphate (XMP) to GMP in the presence of glutamine and ATP through an adenyl-XMP intermediate. This Debaryomyces hansenii (strain ATCC 36239 / CBS 767 / BCRC 21394 / JCM 1990 / NBRC 0083 / IGC 2968) (Yeast) protein is GMP synthase [glutamine-hydrolyzing] (GUA1).